The sequence spans 353 residues: Putative 3-oxoacyl-[acyl-carrier-protein] synthase 3 (353 aa).

Catalysis depends on residues Cys-122, His-268, and Asn-299.

It belongs to the thiolase-like superfamily. FabH family. As to quaternary structure, homodimer.

The protein localises to the cytoplasm. The enzyme catalyses malonyl-[ACP] + acetyl-CoA + H(+) = 3-oxobutanoyl-[ACP] + CO2 + CoA. It participates in lipid metabolism; fatty acid biosynthesis. Functionally, may catalyze the condensation reaction of fatty acid synthesis by the addition to an acyl acceptor of two carbons from malonyl-ACP. This is Putative 3-oxoacyl-[acyl-carrier-protein] synthase 3 from Campylobacter jejuni subsp. jejuni serotype O:2 (strain ATCC 700819 / NCTC 11168).